A 551-amino-acid chain; its full sequence is Hydroxylamine reductase (551 aa).

Positions 3, 6, 18, and 25 each coordinate [2Fe-2S] cluster. Hybrid [4Fe-2O-2S] cluster contacts are provided by H249, E273, C317, C405, C433, C458, E492, and K494. Residue C405 is modified to Cysteine persulfide.

The protein belongs to the HCP family. [2Fe-2S] cluster serves as cofactor. Hybrid [4Fe-2O-2S] cluster is required as a cofactor.

The protein resides in the cytoplasm. The enzyme catalyses A + NH4(+) + H2O = hydroxylamine + AH2 + H(+). Functionally, catalyzes the reduction of hydroxylamine to form NH(3) and H(2)O. The polypeptide is Hydroxylamine reductase (Edwardsiella ictaluri (strain 93-146)).